The chain runs to 561 residues: Excitatory amino acid transporter 4 (561 aa).

The Cytoplasmic segment spans residues 1-52; that stretch reads MSSHGNSLFLRESGAGGGCLQGLQDSLQQRALRTRLRLQTMTREHVRRFLRR. Residue Ser2 is modified to Phosphoserine. The next 3 helical transmembrane spans lie at 53–73, 96–116, and 130–150; these read NAFI…AFAL, MLQM…MASL, and VYYM…VTII. Asn213, Asn229, and Asn236 each carry an N-linked (GlcNAc...) asparagine glycan. The next 3 membrane-spanning stretches (helical) occupy residues 259 to 282, 292 to 319, and 341 to 362; these read SANG…IGGM, FFDS…LFLI, and LTVI…YFLV. An intramembrane region (discontinuously helical) is located at residues 368-398; the sequence is FPFIGGMLQALITAMGTSSSSATLPITFRCL. 385–387 lines the L-aspartate pocket; that stretch reads SSS. The chain crosses the membrane as a helical span at residues 408–434; it reads ITRFVLPVGATVNMDGTALYEALAAIF. Na(+) is bound by residues Gly416, Thr418, and Asn420. L-aspartate contacts are provided by residues Thr424, 465–469, Asp498, and Asn505; that span reads IPQAG. Positions 448-481 form an intramembrane region, discontinuously helical; it reads ITTISITATAASVGAAGIPQAGLVTMVIVLTSVG. A helical transmembrane segment spans residues 495–516; it reads WFLDRLRTMTNVLGDSIGAAVI. Asn505 and Asp509 together coordinate Na(+).

The protein belongs to the dicarboxylate/amino acid:cation symporter (DAACS) (TC 2.A.23) family. SLC1A6 subfamily. Homotrimer. In terms of tissue distribution, brain specific.

Its subcellular location is the cell membrane. The enzyme catalyses K(+)(in) + L-glutamate(out) + 3 Na(+)(out) + H(+)(out) = K(+)(out) + L-glutamate(in) + 3 Na(+)(in) + H(+)(in). The catalysed reaction is K(+)(in) + L-aspartate(out) + 3 Na(+)(out) + H(+)(out) = K(+)(out) + L-aspartate(in) + 3 Na(+)(in) + H(+)(in). It catalyses the reaction D-aspartate(out) + K(+)(in) + 3 Na(+)(out) + H(+)(out) = D-aspartate(in) + K(+)(out) + 3 Na(+)(in) + H(+)(in). Its function is as follows. Sodium-dependent, high-affinity amino acid transporter that mediates the uptake of L-glutamate and also L-aspartate and D-aspartate. Functions as a symporter that transports one amino acid molecule together with two or three Na(+) ions and one proton, in parallel with the counter-transport of one K(+) ion. Mediates Cl(-) flux that is not coupled to amino acid transport; this avoids the accumulation of negative charges due to aspartate and Na(+) symport. Plays a redundant role in the rapid removal of released glutamate from the synaptic cleft, which is essential for terminating the postsynaptic action of glutamate. This chain is Excitatory amino acid transporter 4 (Slc1a6), found in Mus musculus (Mouse).